A 195-amino-acid polypeptide reads, in one-letter code: Nucleoside triphosphate pyrophosphatase (195 aa).

Asp70 serves as the catalytic Proton acceptor.

It belongs to the Maf family. A divalent metal cation serves as cofactor.

It is found in the cytoplasm. The enzyme catalyses a ribonucleoside 5'-triphosphate + H2O = a ribonucleoside 5'-phosphate + diphosphate + H(+). It catalyses the reaction a 2'-deoxyribonucleoside 5'-triphosphate + H2O = a 2'-deoxyribonucleoside 5'-phosphate + diphosphate + H(+). Its function is as follows. Nucleoside triphosphate pyrophosphatase. May have a dual role in cell division arrest and in preventing the incorporation of modified nucleotides into cellular nucleic acids. The protein is Nucleoside triphosphate pyrophosphatase of Cyanothece sp. (strain PCC 7425 / ATCC 29141).